A 596-amino-acid polypeptide reads, in one-letter code: Chaperone protein DnaK (596 aa).

Thr-180 is modified (phosphothreonine; by autocatalysis).

It belongs to the heat shock protein 70 family.

In terms of biological role, acts as a chaperone. The chain is Chaperone protein DnaK from Thermotoga neapolitana (strain ATCC 49049 / DSM 4359 / NBRC 107923 / NS-E).